The chain runs to 254 residues: MPDFSMRQLLEAGVHFGHQTHRWNPKMAPFIYGERNNIHILDLSQTVPLLNSALKVVSDTVARGGRVLFVGTKRQASDIIADAANRSAQYYVNARWLGGMMTNWKTISNSIQRLRKLDELLAGEAQGFTKKERLNLEREREKLDRTLGGIKDMGSVPDLMFIIDTNKEAIAIQEAKRLGIPVVAVIDSNCDPDQIDYPIPGNDDAARAIALYCDLIARAALDGIARQQGAMGIDVGAQVEAPVEPALQAPAEGA.

Belongs to the universal ribosomal protein uS2 family.

This Brucella ovis (strain ATCC 25840 / 63/290 / NCTC 10512) protein is Small ribosomal subunit protein uS2.